We begin with the raw amino-acid sequence, 164 residues long: Large ribosomal subunit protein uL11 (164 aa).

It belongs to the universal ribosomal protein uL11 family. Part of the ribosomal stalk of the 50S ribosomal subunit. Interacts with L10 and the large rRNA to form the base of the stalk. L10 forms an elongated spine to which L12 dimers bind in a sequential fashion forming a multimeric L10(L12)X complex.

Forms part of the ribosomal stalk which helps the ribosome interact with GTP-bound translation factors. The protein is Large ribosomal subunit protein uL11 of Pyrococcus horikoshii (strain ATCC 700860 / DSM 12428 / JCM 9974 / NBRC 100139 / OT-3).